Consider the following 132-residue polypeptide: Fatty acid-binding protein 12 (132 aa).

A fatty acid is bound by residues arginine 107 and 127-129 (RTY).

Belongs to the calycin superfamily. Fatty-acid binding protein (FABP) family. As to expression, highly expressed in adult retina and testis.

Functionally, may play a role in lipid transport. This Mus musculus (Mouse) protein is Fatty acid-binding protein 12 (Fabp12).